The sequence spans 291 residues: Porphobilinogen deaminase (291 aa).

Cysteine 238 is modified (S-(dipyrrolylmethanemethyl)cysteine).

Belongs to the HMBS family. As to quaternary structure, monomer. Requires dipyrromethane as cofactor.

It carries out the reaction 4 porphobilinogen + H2O = hydroxymethylbilane + 4 NH4(+). The protein operates within porphyrin-containing compound metabolism; protoporphyrin-IX biosynthesis; coproporphyrinogen-III from 5-aminolevulinate: step 2/4. Its function is as follows. Tetrapolymerization of the monopyrrole PBG into the hydroxymethylbilane pre-uroporphyrinogen in several discrete steps. The sequence is that of Porphobilinogen deaminase from Clostridium beijerinckii (strain ATCC 51743 / NCIMB 8052) (Clostridium acetobutylicum).